The sequence spans 256 residues: Post-translational flagellin modification protein A (256 aa).

S145 contributes to the substrate binding site. Catalysis depends on Y168, which acts as the Proton acceptor.

This sequence belongs to the short-chain dehydrogenases/reductases (SDR) family.

Functionally, required for biosynthesis of LAH modification in the post-translational modification of Campylobacter coli flagellin. This chain is Post-translational flagellin modification protein A (ptmA), found in Campylobacter coli.